The primary structure comprises 268 residues: MDTSSYIFWDMSPDMFSLGPITIRWYGVFFALSFLCGLYLMTKVFEHEKKPEDDINYLFYYMIAGTVIGARLGHCFFYEPDYYLAHPAEIIKVWHGGLASHGGVLGILTAVYFYSRSRPEQSLAWVLDRITLPAMLGAGLIRLGNLFNSEIIGIPTDVSWAFIFARVDLLPRHPVQLYESIVYFLIFGFLMLAYWKWDWGKQRGLLLGTILTSVFSARFLLEFFKTRQADYGHDLPLSVGQWLSIPAVIIGVLLIFQSVKQAQLEKTS.

The next 3 helical transmembrane spans lie at 25–45, 57–77, and 93–113; these read WYGV…TKVF, YLFY…HCFF, and VWHG…AVYF. Position 142 (arginine 142) interacts with a 1,2-diacyl-sn-glycero-3-phospho-(1'-sn-glycerol). 4 helical membrane passes run 151-171, 175-195, 204-224, and 236-256; these read IIGI…DLLP, VQLY…LAYW, GLLL…LEFF, and PLSV…LLIF.

Belongs to the Lgt family.

It localises to the cell inner membrane. It catalyses the reaction L-cysteinyl-[prolipoprotein] + a 1,2-diacyl-sn-glycero-3-phospho-(1'-sn-glycerol) = an S-1,2-diacyl-sn-glyceryl-L-cysteinyl-[prolipoprotein] + sn-glycerol 1-phosphate + H(+). It participates in protein modification; lipoprotein biosynthesis (diacylglyceryl transfer). Catalyzes the transfer of the diacylglyceryl group from phosphatidylglycerol to the sulfhydryl group of the N-terminal cysteine of a prolipoprotein, the first step in the formation of mature lipoproteins. This Chloroherpeton thalassium (strain ATCC 35110 / GB-78) protein is Phosphatidylglycerol--prolipoprotein diacylglyceryl transferase.